The sequence spans 173 residues: Crossover junction endodeoxyribonuclease RuvC (173 aa).

Residues Asp8, Glu67, and Asp139 contribute to the active site. Residues Asp8, Glu67, and Asp139 each coordinate Mg(2+).

This sequence belongs to the RuvC family. In terms of assembly, homodimer which binds Holliday junction (HJ) DNA. The HJ becomes 2-fold symmetrical on binding to RuvC with unstacked arms; it has a different conformation from HJ DNA in complex with RuvA. In the full resolvosome a probable DNA-RuvA(4)-RuvB(12)-RuvC(2) complex forms which resolves the HJ. Mg(2+) serves as cofactor.

It is found in the cytoplasm. The catalysed reaction is Endonucleolytic cleavage at a junction such as a reciprocal single-stranded crossover between two homologous DNA duplexes (Holliday junction).. Functionally, the RuvA-RuvB-RuvC complex processes Holliday junction (HJ) DNA during genetic recombination and DNA repair. Endonuclease that resolves HJ intermediates. Cleaves cruciform DNA by making single-stranded nicks across the HJ at symmetrical positions within the homologous arms, yielding a 5'-phosphate and a 3'-hydroxyl group; requires a central core of homology in the junction. The consensus cleavage sequence is 5'-(A/T)TT(C/G)-3'. Cleavage occurs on the 3'-side of the TT dinucleotide at the point of strand exchange. HJ branch migration catalyzed by RuvA-RuvB allows RuvC to scan DNA until it finds its consensus sequence, where it cleaves and resolves the cruciform DNA. This chain is Crossover junction endodeoxyribonuclease RuvC, found in Aeromonas hydrophila subsp. hydrophila (strain ATCC 7966 / DSM 30187 / BCRC 13018 / CCUG 14551 / JCM 1027 / KCTC 2358 / NCIMB 9240 / NCTC 8049).